Consider the following 83-residue polypeptide: uncharacterized protein (83 aa).

3 consecutive transmembrane segments (helical) span residues 5–22 (VLLS…VYSI), 32–49 (IIKI…FSPA), and 56–78 (IGTI…IFIA).

It is found in the cell membrane. This is an uncharacterized protein from Rickettsia prowazekii (strain Madrid E).